A 655-amino-acid chain; its full sequence is MAAIHINHDVFNKYHTNGKLRLTTGYVQEAIENNGYPGHDGIVQVLKGKVEQGEQLGHAFTFRIRISDGVFQYNALMSADIDDQIKREVEHLVEGTIIALTKFEIYDQGEGAKNCFLIKGYKILSRYHQVLTSPEVKPRSHSGKPDEHKGYRPNIIIEDVWPEAEGMAADYQENMANPPAAKAPKREFGEEASYNRAAAPEATRARAVPPPARRTASNTERGVMPIAMVTPYVSNFKIHGMVSRKEEIRTFPAKNTKVFNFEITDSNGDTIRCTAFNEVAESLYTTITENLSYYLSGGSVKQANKKFNNTGHDYEITLRSDSIIEAGGELLAAPKLILKRVKLGEIAGYAGQLIDVLVVVEKMDPEATEFTSKAGKSLIKREMELIDESGALVRLTLWGDEATKALVDDYVQKVIAFKGVIPREFNGGFSLGTGSATRIISVPEIAGVSELYDWYANVKPTTEVKMMSQAAGGSNEAPRTIAGLQEMQFGKDSDKGDYATVKAMITRVNPTNALYRGCASEGCQKKLVGENGDYRCEKCNKNMNKFKWLYMMQFELSDETGQVYVTAFGDSAAKIVGKSAAELGELHDESPDEYNAIFERLQFVPKMWRLRCKMDSYNEEVRQKMTVYGVDDVNQDKYIENLKQMIEQMQQMSDY.

A disordered region spans residues 195-217 (NRAAAPEATRARAVPPPARRTAS). Residues 196 to 207 (RAAAPEATRARA) are compositionally biased toward low complexity. Residues 236–326 (FKIHGMVSRK…TLRSDSIIEA (91 aa)) constitute a DNA-binding region (OB). A C4-type zinc finger spans residues 518-539 (CASEGCQKKLVGENGDYRCEKC).

Belongs to the replication factor A protein 1 family. Component of the heterotrimeric canonical replication protein A complex (RPA).

Its subcellular location is the nucleus. Its function is as follows. As part of the heterotrimeric replication protein A complex (RPA/RP-A), binds and stabilizes single-stranded DNA intermediates, that form during DNA replication or upon DNA stress. It prevents their reannealing and in parallel, recruits and activates different proteins and complexes involved in DNA metabolism. Thereby, it plays an essential role both in DNA replication and the cellular response to DNA damage. This Caenorhabditis elegans protein is Probable replication factor A 73 kDa subunit.